The following is a 363-amino-acid chain: Peptide chain release factor 2 (363 aa).

Gln251 bears the N5-methylglutamine mark.

This sequence belongs to the prokaryotic/mitochondrial release factor family. Post-translationally, methylated by PrmC. Methylation increases the termination efficiency of RF2.

It is found in the cytoplasm. Its function is as follows. Peptide chain release factor 2 directs the termination of translation in response to the peptide chain termination codons UGA and UAA. The chain is Peptide chain release factor 2 from Helicobacter pylori (strain HPAG1).